The sequence spans 324 residues: Probable pectinesterase A (324 aa).

The N-terminal stretch at 1–19 is a signal peptide; it reads MHGSLLKLALLSFSLASSA. Residue Q142 coordinates substrate. D165 acts as the Proton donor in catalysis. Residue D186 is the Nucleophile of the active site. Residues R246 and W248 each coordinate substrate. N285 carries an N-linked (GlcNAc...) asparagine glycan.

This sequence belongs to the pectinesterase family.

The protein localises to the secreted. It carries out the reaction [(1-&gt;4)-alpha-D-galacturonosyl methyl ester](n) + n H2O = [(1-&gt;4)-alpha-D-galacturonosyl](n) + n methanol + n H(+). It functions in the pathway glycan metabolism; pectin degradation; 2-dehydro-3-deoxy-D-gluconate from pectin: step 1/5. Involved in maceration and soft-rotting of plant tissue. The sequence is that of Probable pectinesterase A (pmeA) from Aspergillus flavus (strain ATCC 200026 / FGSC A1120 / IAM 13836 / NRRL 3357 / JCM 12722 / SRRC 167).